The following is a 305-amino-acid chain: UDP-3-O-acyl-N-acetylglucosamine deacetylase (305 aa).

The Zn(2+) site is built by His79, His238, and Asp242. His265 (proton donor) is an active-site residue.

Belongs to the LpxC family. Zn(2+) is required as a cofactor.

The enzyme catalyses a UDP-3-O-[(3R)-3-hydroxyacyl]-N-acetyl-alpha-D-glucosamine + H2O = a UDP-3-O-[(3R)-3-hydroxyacyl]-alpha-D-glucosamine + acetate. It functions in the pathway glycolipid biosynthesis; lipid IV(A) biosynthesis; lipid IV(A) from (3R)-3-hydroxytetradecanoyl-[acyl-carrier-protein] and UDP-N-acetyl-alpha-D-glucosamine: step 2/6. In terms of biological role, catalyzes the hydrolysis of UDP-3-O-myristoyl-N-acetylglucosamine to form UDP-3-O-myristoylglucosamine and acetate, the committed step in lipid A biosynthesis. The protein is UDP-3-O-acyl-N-acetylglucosamine deacetylase of Shigella boydii serotype 18 (strain CDC 3083-94 / BS512).